Reading from the N-terminus, the 257-residue chain is UPF0246 protein CLL_A2361 (257 aa).

This sequence belongs to the UPF0246 family.

This is UPF0246 protein CLL_A2361 from Clostridium botulinum (strain Eklund 17B / Type B).